The following is a 190-amino-acid chain: Elongation factor P-like protein (190 aa).

The protein belongs to the elongation factor P family.

The protein is Elongation factor P-like protein of Photorhabdus laumondii subsp. laumondii (strain DSM 15139 / CIP 105565 / TT01) (Photorhabdus luminescens subsp. laumondii).